The chain runs to 495 residues: Bile acid-sensitive ion channel (495 aa).

The tract at residues 1 to 30 (MEHTEKSQVHAEKGLLGKIKRYLSKRPLPS) is binds the plasma membrane and stabilizes the channel in the closed state. Over 1 to 61 (MEHTEKSQVH…NIAQNQNKVR (61 aa)) the chain is Cytoplasmic. A helical transmembrane segment spans residues 62–82 (KVIWLAVVLGSVSLLVWQIYS). The Extracellular portion of the chain corresponds to 83–459 (RLVNYFTWPT…GLFCGASLIT (377 aa)). Intrachain disulfides connect Cys-112/Cys-207, Cys-185/Cys-192, Cys-298/Cys-377, Cys-315/Cys-373, Cys-328/Cys-350, and Cys-330/Cys-342. Residues Asn-147, Asn-163, and Asn-179 are each glycosylated (N-linked (GlcNAc...) asparagine). 3 N-linked (GlcNAc...) asparagine glycosylation sites follow: Asn-370, Asn-405, and Asn-421. Residues 454–456 (GAS) carry the GAS motif; ion selectivity filter motif. A helical transmembrane segment spans residues 460–480 (IIEIIEYFFTNFYWVLIFFLL). At 481–495 (KILETIQRTSPPQAV) the chain is on the cytoplasmic side.

Belongs to the amiloride-sensitive sodium channel (TC 1.A.6) family. ASIC5 subfamily. As to quaternary structure, forms homotrimeric channels. In terms of tissue distribution, expressed by cholangiocytes (at protein level). Detected in cerebellum, brainstem, kidney, liver, hepatocytes, lung, intestine and embryo. In the cerebellum, restricted to interneurons in the granular layer, specifically in GRM1-expressing unipolar brush cells of the vestibulocerebellum.

It localises to the apical cell membrane. It is found in the cell membrane. The catalysed reaction is Na(+)(in) = Na(+)(out). It carries out the reaction Li(+)(in) = Li(+)(out). The enzyme catalyses K(+)(in) = K(+)(out). It catalyses the reaction H(+)(in) = H(+)(out). With respect to regulation, inhibited by the diuretic drug amiloride. Contrary to its rat ortholog it is not inhibited by Ca(2+). Functionally, forms bile acid-gated sodium channels and may play a role in bile acid-dependent absorption and secretion by epithelial cells of the bile ducts. Displays high selectivity for sodium ions but can also permit the permeation of other cations. The gating could be indirect and the consequence of alterations of the membrane environment of the channel by bile acids. As a sodium channel of type II unipolar brush cells of the vestibulocerebellum, controlling the electrical activity of these cells, could play a role in motor coordination and balance. This is Bile acid-sensitive ion channel from Mus musculus (Mouse).